The sequence spans 587 residues: NADH-quinone oxidoreductase subunit C/D (587 aa).

The segment at 1 to 178 (MAAPTTEHAE…EPFSLPDDVQ (178 aa)) is NADH dehydrogenase I subunit C. The interval 202–587 (DFLFLNLGPN…IDFVMADVDR (386 aa)) is NADH dehydrogenase I subunit D.

It in the N-terminal section; belongs to the complex I 30 kDa subunit family. The protein in the C-terminal section; belongs to the complex I 49 kDa subunit family. NDH-1 is composed of 13 different subunits. Subunits NuoB, CD, E, F, and G constitute the peripheral sector of the complex.

It is found in the cell inner membrane. The catalysed reaction is a quinone + NADH + 5 H(+)(in) = a quinol + NAD(+) + 4 H(+)(out). Its function is as follows. NDH-1 shuttles electrons from NADH, via FMN and iron-sulfur (Fe-S) centers, to quinones in the respiratory chain. The immediate electron acceptor for the enzyme in this species is believed to be ubiquinone. Couples the redox reaction to proton translocation (for every two electrons transferred, four hydrogen ions are translocated across the cytoplasmic membrane), and thus conserves the redox energy in a proton gradient. This chain is NADH-quinone oxidoreductase subunit C/D, found in Methylococcus capsulatus (strain ATCC 33009 / NCIMB 11132 / Bath).